A 288-amino-acid chain; its full sequence is 33 kDa chaperonin (288 aa).

Cystine bridges form between Cys-236-Cys-238 and Cys-269-Cys-272.

Belongs to the HSP33 family. Post-translationally, under oxidizing conditions two disulfide bonds are formed involving the reactive cysteines. Under reducing conditions zinc is bound to the reactive cysteines and the protein is inactive.

The protein resides in the cytoplasm. Its function is as follows. Redox regulated molecular chaperone. Protects both thermally unfolding and oxidatively damaged proteins from irreversible aggregation. Plays an important role in the bacterial defense system toward oxidative stress. This is 33 kDa chaperonin from Syntrophotalea carbinolica (strain DSM 2380 / NBRC 103641 / GraBd1) (Pelobacter carbinolicus).